A 205-amino-acid polypeptide reads, in one-letter code: Proteasome subunit beta type-3 (205 aa).

N-acetylserine is present on S2. K77 carries the post-translational modification N6-acetyllysine.

The protein belongs to the peptidase T1B family. As to quaternary structure, the 26S proteasome consists of a 20S proteasome core and two 19S regulatory subunits. The 20S proteasome core is a barrel-shaped complex made of 28 subunits that are arranged in four stacked rings. The two outer rings are each formed by seven alpha subunits, and the two inner rings are formed by seven beta subunits. The proteolytic activity is exerted by three beta-subunits PSMB5, PSMB6 and PSMB7.

The protein localises to the cytoplasm. Its subcellular location is the nucleus. Functionally, non-catalytic component of the 20S core proteasome complex involved in the proteolytic degradation of most intracellular proteins. This complex plays numerous essential roles within the cell by associating with different regulatory particles. Associated with two 19S regulatory particles, forms the 26S proteasome and thus participates in the ATP-dependent degradation of ubiquitinated proteins. The 26S proteasome plays a key role in the maintenance of protein homeostasis by removing misfolded or damaged proteins that could impair cellular functions, and by removing proteins whose functions are no longer required. Associated with the PA200 or PA28, the 20S proteasome mediates ubiquitin-independent protein degradation. This type of proteolysis is required in several pathways including spermatogenesis (20S-PA200 complex) or generation of a subset of MHC class I-presented antigenic peptides (20S-PA28 complex). The chain is Proteasome subunit beta type-3 (PSMB3) from Bos taurus (Bovine).